The primary structure comprises 118 residues: Large ribosomal subunit protein uL18 (118 aa).

The protein belongs to the universal ribosomal protein uL18 family. As to quaternary structure, part of the 50S ribosomal subunit; part of the 5S rRNA/L5/L18/L25 subcomplex. Contacts the 5S and 23S rRNAs.

In terms of biological role, this is one of the proteins that bind and probably mediate the attachment of the 5S RNA into the large ribosomal subunit, where it forms part of the central protuberance. In Rhizorhabdus wittichii (strain DSM 6014 / CCUG 31198 / JCM 15750 / NBRC 105917 / EY 4224 / RW1) (Sphingomonas wittichii), this protein is Large ribosomal subunit protein uL18.